An 88-amino-acid chain; its full sequence is Small ribosomal subunit protein bS20 (88 aa).

Disordered stretches follow at residues 1 to 22 and 69 to 88; these read MPNI…AQNA and KNAA…GLSA.

It belongs to the bacterial ribosomal protein bS20 family.

In terms of biological role, binds directly to 16S ribosomal RNA. This is Small ribosomal subunit protein bS20 from Shouchella clausii (strain KSM-K16) (Alkalihalobacillus clausii).